The chain runs to 244 residues: DnaJ homolog subfamily C member 4 (244 aa).

Positions Asn-37–Leu-102 constitute a J domain. The tract at residues Arg-96–Trp-127 is disordered. Residues His-103–Trp-127 are compositionally biased toward polar residues. Residues Val-159 to Phe-178 form a helical membrane-spanning segment. A disordered region spans residues Arg-208–Pro-244.

Its subcellular location is the membrane. This chain is DnaJ homolog subfamily C member 4 (Dnajc4), found in Mus musculus (Mouse).